The sequence spans 506 residues: Protein MGF 505-9R (506 aa).

ANK repeat units lie at residues 54-83, 253-283, and 313-343; these read SIHK…NLKY, QVDT…EIVE, and FVKK…KINL.

Belongs to the asfivirus MGF 505 family.

Functionally, plays a role in virus cell tropism, and may be required for efficient virus replication in macrophages. In African swine fever virus (isolate Tick/Malawi/Lil 20-1/1983) (ASFV), this protein is Protein MGF 505-9R.